The following is a 177-amino-acid chain: uncharacterized protein (177 aa).

This is an uncharacterized protein from Acanthamoeba polyphaga mimivirus (APMV).